Consider the following 355-residue polypeptide: F-box only protein 32 (355 aa).

A Nuclear localization signal motif is present at residues 62-67 (KKRKKD). The Nuclear export signal signature appears at 169–173 (LLQTL). An F-box domain is found at 223–271 (LTFTDLPLCLQLNIMQRLSDGRDLVSLGQAAPDLHVLSEDRLLWKKLCQ). A Bipartite nuclear localization signal motif is present at residues 280–295 (RKRLILSDKGQLDWKK).

Part of the SCF (SKP1-CUL1-F-box) E3 ubiquitin-protein ligase complex SCF(FBXO32) formed of CUL1, SKP1, RBX1 and FBXO32. As to expression, specifically expressed in cardiac and skeletal muscle.

Its subcellular location is the cytoplasm. It localises to the nucleus. Its pathway is protein modification; protein ubiquitination. In terms of biological role, substrate recognition component of a SCF (SKP1-CUL1-F-box protein) E3 ubiquitin-protein ligase complex which mediates the ubiquitination and subsequent proteasomal degradation of target proteins. Probably recognizes and binds to phosphorylated target proteins during skeletal muscle atrophy. Recognizes TERF1. This Homo sapiens (Human) protein is F-box only protein 32 (FBXO32).